The primary structure comprises 260 residues: Coiled-coil domain-containing protein 127 (260 aa).

Residues 76-139 adopt a coiled-coil conformation; sequence AVISEHRRAV…EKSRLQPLRN (64 aa).

This Mus musculus (Mouse) protein is Coiled-coil domain-containing protein 127 (Ccdc127).